A 98-amino-acid chain; its full sequence is DNA-binding protein Fis (98 aa).

Positions 74 to 93 (QTRAAQMMGINRGTLRKKLK) form a DNA-binding region, H-T-H motif.

This sequence belongs to the transcriptional regulatory Fis family. Homodimer.

Functionally, activates ribosomal RNA transcription. Plays a direct role in upstream activation of rRNA promoters. This is DNA-binding protein Fis from Sodalis glossinidius (strain morsitans).